The sequence spans 142 residues: Putative transmembrane protein INAFM1 (142 aa).

Gly residues predominate over residues 1–19; that stretch reads MRGTSCVGGGAESPGGAGL. The interval 1–22 is disordered; that stretch reads MRGTSCVGGGAESPGGAGLSEG. Residues 36–56 form a helical membrane-spanning segment; that stretch reads YFLCVSLAAVLLAVYYGLIWV. Disordered stretches follow at residues 61–83 and 99–142; these read PAAP…PGVP and VPGG…RRPG. A compositionally biased stretch (pro residues) spans 64–83; the sequence is PAGPQPSAPSPPCAARPGVP. A compositionally biased stretch (low complexity) spans 99–111; sequence VPGGPRPQLQLPL. The span at 117-142 shows a compositional bias: basic and acidic residues; it reads YSDPDRRPSRQTPRETPEAAEGRRPG.

Its subcellular location is the membrane. The sequence is that of Putative transmembrane protein INAFM1 from Homo sapiens (Human).